A 90-amino-acid polypeptide reads, in one-letter code: Probable Fe(2+)-trafficking protein (90 aa).

The protein belongs to the Fe(2+)-trafficking protein family.

In terms of biological role, could be a mediator in iron transactions between iron acquisition and iron-requiring processes, such as synthesis and/or repair of Fe-S clusters in biosynthetic enzymes. The protein is Probable Fe(2+)-trafficking protein of Vibrio vulnificus (strain CMCP6).